The chain runs to 377 residues: Homoserine O-acetyltransferase (377 aa).

The AB hydrolase-1 domain maps to 48–347 (NVVLIEHALT…PVGHDAFLTE (300 aa)). The active-site Nucleophile is Ser-143. Position 213 (Arg-213) interacts with substrate. Active-site residues include Asp-311 and His-341. Asp-342 contributes to the substrate binding site.

This sequence belongs to the AB hydrolase superfamily. MetX family. As to quaternary structure, homodimer.

Its subcellular location is the cytoplasm. The enzyme catalyses L-homoserine + acetyl-CoA = O-acetyl-L-homoserine + CoA. The protein operates within amino-acid biosynthesis; L-methionine biosynthesis via de novo pathway; O-acetyl-L-homoserine from L-homoserine: step 1/1. Functionally, transfers an acetyl group from acetyl-CoA to L-homoserine, forming acetyl-L-homoserine. The protein is Homoserine O-acetyltransferase of Corynebacterium efficiens (strain DSM 44549 / YS-314 / AJ 12310 / JCM 11189 / NBRC 100395).